The following is a 201-amino-acid chain: MIGFIRGLLVAKRAPSLLIDVQGLGYELDAPMSTFYNLPEIGAEVRLYTHLQIREDAHSLFGFGTEAERGLFRSLIRVSGIGAKLALAILSGISVDDFRACVERQDSARLVRLPGIGKKTAERLIIELRDRLDIGVPSLAPASFAGGAAPLPAADPADEAVSALIALGFKPQEANTLVARQAAEGRSAEDLIRAALQSAVR.

Residues 1 to 64 (MIGFIRGLLV…EDAHSLFGFG (64 aa)) form a domain I region. Residues 65–143 (TEAERGLFRS…IGVPSLAPAS (79 aa)) are domain II. The interval 144 to 153 (FAGGAAPLPA) is flexible linker. A domain III region spans residues 153–201 (AADPADEAVSALIALGFKPQEANTLVARQAAEGRSAEDLIRAALQSAVR).

It belongs to the RuvA family. As to quaternary structure, homotetramer. Forms an RuvA(8)-RuvB(12)-Holliday junction (HJ) complex. HJ DNA is sandwiched between 2 RuvA tetramers; dsDNA enters through RuvA and exits via RuvB. An RuvB hexamer assembles on each DNA strand where it exits the tetramer. Each RuvB hexamer is contacted by two RuvA subunits (via domain III) on 2 adjacent RuvB subunits; this complex drives branch migration. In the full resolvosome a probable DNA-RuvA(4)-RuvB(12)-RuvC(2) complex forms which resolves the HJ.

The protein resides in the cytoplasm. In terms of biological role, the RuvA-RuvB-RuvC complex processes Holliday junction (HJ) DNA during genetic recombination and DNA repair, while the RuvA-RuvB complex plays an important role in the rescue of blocked DNA replication forks via replication fork reversal (RFR). RuvA specifically binds to HJ cruciform DNA, conferring on it an open structure. The RuvB hexamer acts as an ATP-dependent pump, pulling dsDNA into and through the RuvAB complex. HJ branch migration allows RuvC to scan DNA until it finds its consensus sequence, where it cleaves and resolves the cruciform DNA. In Methylococcus capsulatus (strain ATCC 33009 / NCIMB 11132 / Bath), this protein is Holliday junction branch migration complex subunit RuvA.